We begin with the raw amino-acid sequence, 111 residues long: UPF0060 membrane protein Aave_2845 (111 aa).

4 consecutive transmembrane segments (helical) span residues 7-27, 33-53, 63-83, and 90-110; these read FLLY…PWLW, SAWL…LLTL, AAYG…VDGI, and LAGA…PRGA.

It belongs to the UPF0060 family.

The protein localises to the cell inner membrane. The sequence is that of UPF0060 membrane protein Aave_2845 from Paracidovorax citrulli (strain AAC00-1) (Acidovorax citrulli).